We begin with the raw amino-acid sequence, 241 residues long: Phosphoadenosine 5'-phosphosulfate reductase (241 aa).

Residues 221 to 241 (GADPRSGRWRGKAKTECGLHA) are disordered. C237 (nucleophile; cysteine thiosulfonate intermediate) is an active-site residue.

It belongs to the PAPS reductase family. CysH subfamily.

It is found in the cytoplasm. The catalysed reaction is [thioredoxin]-disulfide + sulfite + adenosine 3',5'-bisphosphate + 2 H(+) = [thioredoxin]-dithiol + 3'-phosphoadenylyl sulfate. The protein operates within sulfur metabolism; hydrogen sulfide biosynthesis; sulfite from sulfate: step 3/3. Catalyzes the formation of sulfite from phosphoadenosine 5'-phosphosulfate (PAPS) using thioredoxin as an electron donor. In Gloeobacter violaceus (strain ATCC 29082 / PCC 7421), this protein is Phosphoadenosine 5'-phosphosulfate reductase.